The chain runs to 169 residues: Disulfide bond formation protein B (169 aa).

Topologically, residues 1-14 are cytoplasmic; the sequence is MNNLTLSLRRERRL. A helical transmembrane segment spans residues 15–31; it reads LVLLALVCLALLAGALY. At 32–49 the chain is on the periplasmic side; it reads LQYVKNEDPCPLCIIQRY. A disulfide bridge links Cys-41 with Cys-44. Residues 50–64 form a helical membrane-spanning segment; it reads FFVLIAVFAFIGAGM. At 65–71 the chain is on the cytoplasmic side; it reads ASGAGVA. Residues 72-89 traverse the membrane as a helical segment; that stretch reads VTEALIVLSAAAGVGTAA. Residues 90–144 lie on the Periplasmic side of the membrane; sequence RHLYVQLNPGFSCGFDALQPVVDSLPPARWLPGVFKVAGLCETVYPPIFGILLPG. Cys-102 and Cys-130 are joined by a disulfide. Residues 145–163 form a helical membrane-spanning segment; that stretch reads WALIAFVLIAVPVAVSLLR. The Cytoplasmic portion of the chain corresponds to 164 to 169; that stretch reads HRGRLR.

It belongs to the DsbB family.

It localises to the cell inner membrane. Its function is as follows. Required for disulfide bond formation in some periplasmic proteins. Acts by oxidizing the DsbA protein. The sequence is that of Disulfide bond formation protein B from Burkholderia mallei (strain ATCC 23344).